A 227-amino-acid polypeptide reads, in one-letter code: Floral homeotic protein DEFICIENS (227 aa).

Residues arginine 3–tyrosine 57 enclose the MADS-box domain. One can recognise a K-box domain in the interval tyrosine 84–aspartate 174.

Its subcellular location is the nucleus. Functionally, transcription factor involved in the genetic control of flower development. Acts in conjunction with GLOBOSA (glo). This chain is Floral homeotic protein DEFICIENS (DEFA), found in Antirrhinum majus (Garden snapdragon).